The chain runs to 45 residues: MSKRTFQPNNRRRAKVHGFRLRMRTRAGRAILSARRTKGRAQISA.

It belongs to the bacterial ribosomal protein bL34 family.

This is Large ribosomal subunit protein bL34 from Kineococcus radiotolerans (strain ATCC BAA-149 / DSM 14245 / SRS30216).